A 311-amino-acid chain; its full sequence is Methionyl-tRNA formyltransferase (311 aa).

Serine 109–proline 112 serves as a coordination point for (6S)-5,6,7,8-tetrahydrofolate.

It belongs to the Fmt family.

It carries out the reaction L-methionyl-tRNA(fMet) + (6R)-10-formyltetrahydrofolate = N-formyl-L-methionyl-tRNA(fMet) + (6S)-5,6,7,8-tetrahydrofolate + H(+). Functionally, attaches a formyl group to the free amino group of methionyl-tRNA(fMet). The formyl group appears to play a dual role in the initiator identity of N-formylmethionyl-tRNA by promoting its recognition by IF2 and preventing the misappropriation of this tRNA by the elongation apparatus. This is Methionyl-tRNA formyltransferase from Kosmotoga olearia (strain ATCC BAA-1733 / DSM 21960 / TBF 19.5.1).